The following is a 270-amino-acid chain: Imidazole glycerol phosphate synthase subunit HisF (270 aa).

Catalysis depends on residues aspartate 11 and aspartate 135.

Belongs to the HisA/HisF family. As to quaternary structure, heterodimer of HisH and HisF.

It is found in the cytoplasm. The catalysed reaction is 5-[(5-phospho-1-deoxy-D-ribulos-1-ylimino)methylamino]-1-(5-phospho-beta-D-ribosyl)imidazole-4-carboxamide + L-glutamine = D-erythro-1-(imidazol-4-yl)glycerol 3-phosphate + 5-amino-1-(5-phospho-beta-D-ribosyl)imidazole-4-carboxamide + L-glutamate + H(+). It participates in amino-acid biosynthesis; L-histidine biosynthesis; L-histidine from 5-phospho-alpha-D-ribose 1-diphosphate: step 5/9. Its function is as follows. IGPS catalyzes the conversion of PRFAR and glutamine to IGP, AICAR and glutamate. The HisF subunit catalyzes the cyclization activity that produces IGP and AICAR from PRFAR using the ammonia provided by the HisH subunit. The sequence is that of Imidazole glycerol phosphate synthase subunit HisF from Haloquadratum walsbyi (strain DSM 16790 / HBSQ001).